A 195-amino-acid chain; its full sequence is E3 ubiquitin-protein ligase ZNRF1 (195 aa).

Polar residues predominate over residues 1 to 10 (MGGKQSSASR). 2 disordered regions span residues 1–36 (MGGK…HFRA) and 61–84 (PFGL…DSRG). The N-myristoyl glycine moiety is linked to residue G2. The span at 18 to 29 (VSSDDSAVPPSS) shows a compositional bias: low complexity. The RING-type; atypical zinc-finger motif lies at 152–193 (CVICLEELSQGDTIARLPCLCIYHKSCIDSWFEVNRCCPEHP).

Its subcellular location is the endosome. It localises to the lysosome. The protein resides in the membrane. It carries out the reaction S-ubiquitinyl-[E2 ubiquitin-conjugating enzyme]-L-cysteine + [acceptor protein]-L-lysine = [E2 ubiquitin-conjugating enzyme]-L-cysteine + N(6)-ubiquitinyl-[acceptor protein]-L-lysine.. It functions in the pathway protein modification; protein ubiquitination. In terms of biological role, E3 ubiquitin-protein ligase that plays a role in neuron cells differentiation. Plays a role in the establishment and maintenance of neuronal transmission and plasticity. This Xenopus tropicalis (Western clawed frog) protein is E3 ubiquitin-protein ligase ZNRF1 (znrf1).